The chain runs to 409 residues: MASGKATGKTDAPAPVIKLGGPKPPKVGSSGNASWFQAIKAKKLNSHPPKFEGSGVPDNENLKTSQQHGYWRRQARFKPVKGGRKPVPDAWYFYYTGTGPAADLNWGDSQDGIVWVAAKGADVKSRSHQGTRDPDKFDQYPLRFSDGGPDGNFRWDFIPLNRGRSGRSTAASSAASSRAPSRDGSRGRRSGSEDDLIARAAKIIQDQQKKGSRITKVKADEMAHRRYCKRTIPPGYKVDQVFGPRTKGKEGNFGDDKMNEEGIKDGRVTAMLNLVPSSHACLFGSRVTPKLQPDGLHLKFEFTTVVPRDDPQFDNYVKICDQCVDGVGTRPKDDEPRPKSRSSSRPATRTSSPAPRQQRPKKEKKPKKQDDEVDKALTSNEERNNAQLEFDEEPKVINWGDSALGENEL.

Disordered stretches follow at residues 1 to 32 (MASGKATGKTDAPAPVIKLGGPKPPKVGSSGN), 45 to 69 (NSHPPKFEGSGVPDNENLKTSQQHG), 122 to 145 (DVKSRSHQGTRDPDKFDQYPLRFS), 164 to 194 (RSGRSTAASSAASSRAPSRDGSRGRRSGSED), and 238 to 259 (VDQVFGPRTKGKEGNFGDDKMN). The segment covering 15–31 (PVIKLGGPKPPKVGSSG) has biased composition (low complexity). The segment at 29 to 160 (SSGNASWFQA…GNFRWDFIPL (132 aa)) is RNA-binding. Residues 31 to 156 (GNASWFQAIK…GGPDGNFRWD (126 aa)) form the CoV N NTD domain. The span at 122–138 (DVKSRSHQGTRDPDKFD) shows a compositional bias: basic and acidic residues. Residues 164–179 (RSGRSTAASSAASSRA) are compositionally biased toward low complexity. Composition is skewed to basic and acidic residues over residues 180–192 (PSRDGSRGRRSGS) and 247–259 (KGKEGNFGDDKMN). Residues Ser190 and Ser192 each carry the phosphoserine; by host modification. A CoV N CTD domain is found at 219 to 331 (ADEMAHRRYC…QCVDGVGTRP (113 aa)). The interval 226–333 (RYCKRTIPPG…VDGVGTRPKD (108 aa)) is dimerization. Cys320 and Cys323 are joined by a disulfide. The disordered stretch occupies residues 326 to 409 (GVGTRPKDDE…GDSALGENEL (84 aa)). Residues 341–357 (RSSSRPATRTSSPAPRQ) are compositionally biased toward low complexity. Residues 358 to 367 (QRPKKEKKPK) show a composition bias toward basic residues. The residue at position 378 (Thr378) is a Phosphothreonine; by host. Ser379 bears the Phosphoserine; by host mark.

It belongs to the gammacoronavirus nucleocapsid protein family. Homooligomer. Both monomeric and oligomeric forms interact with RNA. Interacts with protein M. Interacts with NSP3; this interaction serves to tether the genome to the newly translated replicase-transcriptase complex at a very early stage of infection. ADP-ribosylated. The ADP-ribosylation is retained in the virion during infection. Post-translationally, phosphorylated on serine and threonine residues.

Its subcellular location is the virion. It is found in the host endoplasmic reticulum-Golgi intermediate compartment. It localises to the host Golgi apparatus. In terms of biological role, packages the positive strand viral genome RNA into a helical ribonucleocapsid (RNP) and plays a fundamental role during virion assembly through its interactions with the viral genome and membrane protein M. Plays an important role in enhancing the efficiency of subgenomic viral RNA transcription as well as viral replication. The sequence is that of Nucleoprotein from Avian infectious bronchitis virus (strain Arkansas 99) (IBV).